Reading from the N-terminus, the 288-residue chain is MNPYRSYDARIIEVKELTSREKLFSLKFLDNEIEENFTFKPGQFVIVDIRGFGEFPISLCSSPTRRPIQLCIRRVGRMTKFIHKMNEGDIIGIRGPYGNGFPMDLMEGSNLILIAGGLGMAPLRSVLWYAIDSGKYEKIYLFYGTKSYEDILFRDEIIHLLKHGEKLNCHVKLAYEVETPSCIYLERGFSEKVCKGVVTDLFRGEEFDVENSYALICGPPVMYKYVIRELLDRGLSPGRIYMTLERRMRCGVGKCGHCIVGTSVSIKYICKDGPVFTYWDALSTRGLI.

The 100-residue stretch at Y4–M103 folds into the FAD-binding FR-type domain. Residues C250, C255, C258, and C270 each contribute to the [2Fe-2S] cluster site.

As to quaternary structure, dimer of heterotetramer of alpha, beta, gamma and delta subunits. The nickel-containing alpha and delta subunits constitute the hydrogenase activity. The beta and gamma subunits (flavin-containing dimer) constitute the sulfur reductase activity. FAD is required as a cofactor. The cofactor is [2Fe-2S] cluster.

Its subcellular location is the cytoplasm. It catalyses the reaction n sulfur + H2 = (n-1) sulfur + hydrogen sulfide + H(+). Functionally, part of a bifunctional enzyme complex that functions as a hydrogen-evolving hydrogenase with sulfur-reducing activity. May play a role in hydrogen cycling during fermentative growth. Activity exhibited with NAD in addition to NADPH. The beta and gamma subunits form the sulfur-reducing component that catalyzes the cytoplasmic production of hydrogen sulfide in the presence of elemental sulfur. This chain is Sulfhydrogenase 2 subunit gamma, found in Pyrococcus furiosus (strain ATCC 43587 / DSM 3638 / JCM 8422 / Vc1).